We begin with the raw amino-acid sequence, 224 residues long: 2,5-diamino-6-ribosylamino-4(3H)-pyrimidinone 5'-phosphate reductase (224 aa).

Residues glycine 16, threonine 57, aspartate 61, 83–86 (SKLR), valine 134, and 156–159 (GGTL) each bind NADP(+).

It belongs to the HTP reductase family. In terms of assembly, homodimer.

It catalyses the reaction 2,5-diamino-6-(1-D-ribitylamino)pyrimidin-4(3H)-one 5'-phosphate + NADP(+) = 2,5-diamino-6-(1-D-ribosylamino)pyrimidin-4(3H)-one 5'-phosphate + NADPH + H(+). It carries out the reaction 2,5-diamino-6-(1-D-ribitylamino)pyrimidin-4(3H)-one 5'-phosphate + NAD(+) = 2,5-diamino-6-(1-D-ribosylamino)pyrimidin-4(3H)-one 5'-phosphate + NADH + H(+). Its pathway is cofactor biosynthesis; riboflavin biosynthesis. Its function is as follows. Catalyzes an early step in riboflavin biosynthesis, the NAD(P)H-dependent reduction of the ribose side chain of 2,5-diamino-6-ribosylamino-4(3H)-pyrimidinone 5'-phosphate, yielding 2,5-diamino-6-ribitylamino-4(3H)-pyrimidinone 5'-phosphate. The beta anomer is the authentic substrate, and the alpha anomer can serve as substrate subsequent to spontaneous anomerization. NADPH and NADH function equally well as the reductants. Does not catalyze the reduction of 5-amino-6-(5-phospho-D-ribosylamino)uracil to 5-amino-6-(5-phospho-D-ribitylamino)uracil. This chain is 2,5-diamino-6-ribosylamino-4(3H)-pyrimidinone 5'-phosphate reductase (arfC), found in Methanocaldococcus jannaschii (strain ATCC 43067 / DSM 2661 / JAL-1 / JCM 10045 / NBRC 100440) (Methanococcus jannaschii).